A 648-amino-acid chain; its full sequence is ABC transporter G family member 14 (648 aa).

Positions 53–304 (LKFEEVVYKV…FSSLGFSTSL (252 aa)) constitute an ABC transporter domain. 99-106 (GPSGSGKT) contacts ATP. Asn-346 carries an N-linked (GlcNAc...) asparagine glycan. Residues 384–590 (YQFTVLLQRG…CYKLLLGIQY (207 aa)) form the ABC transmembrane type-2 domain. Transmembrane regions (helical) follow at residues 405–425 (LRIF…WHTP), 435–455 (LLFF…VFTF), 485–505 (LPLE…MGGL), 512–532 (FILS…LGLA), 543–562 (ATTL…GYYV), 569–591 (IVWL…IQYT), and 620–640 (LWID…MAYM).

The protein belongs to the ABC transporter superfamily. ABCG family. Eye pigment precursor importer (TC 3.A.1.204) subfamily. As to quaternary structure, forms heterodimers with ABCG11. As to expression, accumulates primarily in the pericycle and stelar cells of roots. Expressed in leaves, stems, flowers and siliques, and, at low levels, in roots. Accumulates in the phloem.

The protein resides in the cell membrane. Its function is as follows. Positive regulator of plant growth which acts as an efflux pump involved in the major root-to-shoot (acropetal) long-distance cytokinin (CK) transport via the xylem sap. Together with ABCG9 and ABCG11, required for vascular development by regulating lipid/sterol homeostasis. Involved in CK-dependent responses to oxidative stress such as hydrogen peroxide H(2)O(2). (Microbial infection) Required for SNC1-mediated defense response against the virulent pathogen Pseudomonas syringae pv. tomato DC3000 by promoting the accumulation of trans-zeatin (tZ)-type cytokinins (CK) in the shoot. This chain is ABC transporter G family member 14, found in Arabidopsis thaliana (Mouse-ear cress).